A 137-amino-acid chain; its full sequence is Large ribosomal subunit protein uL16 (137 aa).

The protein belongs to the universal ribosomal protein uL16 family. In terms of assembly, part of the 50S ribosomal subunit.

Functionally, binds 23S rRNA and is also seen to make contacts with the A and possibly P site tRNAs. The chain is Large ribosomal subunit protein uL16 from Lactococcus lactis subsp. lactis (strain IL1403) (Streptococcus lactis).